Reading from the N-terminus, the 399-residue chain is Acetate kinase (399 aa).

N7 provides a ligand contact to Mg(2+). K14 contacts ATP. Residue R89 coordinates substrate. D146 serves as the catalytic Proton donor/acceptor. ATP contacts are provided by residues 206 to 210, 280 to 282, and 328 to 332; these read HIGSG, DFR, and GIGEN. A Mg(2+)-binding site is contributed by E382.

The protein belongs to the acetokinase family. As to quaternary structure, homodimer. It depends on Mg(2+) as a cofactor. Requires Mn(2+) as cofactor.

It localises to the cytoplasm. The enzyme catalyses acetate + ATP = acetyl phosphate + ADP. The protein operates within metabolic intermediate biosynthesis; acetyl-CoA biosynthesis; acetyl-CoA from acetate: step 1/2. In terms of biological role, catalyzes the formation of acetyl phosphate from acetate and ATP. Can also catalyze the reverse reaction. The polypeptide is Acetate kinase (Campylobacter hominis (strain ATCC BAA-381 / DSM 21671 / CCUG 45161 / LMG 19568 / NCTC 13146 / CH001A)).